The primary structure comprises 222 residues: Deoxyribose-phosphate aldolase (222 aa).

Asp89 (proton donor/acceptor) is an active-site residue. Lys151 acts as the Schiff-base intermediate with acetaldehyde in catalysis. Residue Lys180 is the Proton donor/acceptor of the active site.

Belongs to the DeoC/FbaB aldolase family. DeoC type 1 subfamily.

Its subcellular location is the cytoplasm. The catalysed reaction is 2-deoxy-D-ribose 5-phosphate = D-glyceraldehyde 3-phosphate + acetaldehyde. It functions in the pathway carbohydrate degradation; 2-deoxy-D-ribose 1-phosphate degradation; D-glyceraldehyde 3-phosphate and acetaldehyde from 2-deoxy-alpha-D-ribose 1-phosphate: step 2/2. Its function is as follows. Catalyzes a reversible aldol reaction between acetaldehyde and D-glyceraldehyde 3-phosphate to generate 2-deoxy-D-ribose 5-phosphate. This chain is Deoxyribose-phosphate aldolase, found in Acholeplasma laidlawii (strain PG-8A).